Here is a 455-residue protein sequence, read N- to C-terminus: Argininosuccinate lyase (455 aa).

This sequence belongs to the lyase 1 family. Argininosuccinate lyase subfamily.

The protein resides in the cytoplasm. It carries out the reaction 2-(N(omega)-L-arginino)succinate = fumarate + L-arginine. It participates in amino-acid biosynthesis; L-arginine biosynthesis; L-arginine from L-ornithine and carbamoyl phosphate: step 3/3. This chain is Argininosuccinate lyase, found in Shewanella baltica (strain OS155 / ATCC BAA-1091).